A 312-amino-acid chain; its full sequence is Malate dehydrogenase (312 aa).

Residues 12–17 (GAGFTG) and Asp36 contribute to the NAD(+) site. Positions 87 and 93 each coordinate substrate. NAD(+) contacts are provided by residues Asn100 and 123 to 125 (LTN). Asn125 lines the substrate pocket. A Phosphoserine modification is found at Ser149. Residue Arg156 participates in substrate binding. The Proton acceptor role is filled by His180.

This sequence belongs to the LDH/MDH superfamily. MDH type 3 family.

The enzyme catalyses (S)-malate + NAD(+) = oxaloacetate + NADH + H(+). Its function is as follows. Catalyzes the reversible oxidation of malate to oxaloacetate. This chain is Malate dehydrogenase, found in Bacillus pumilus (strain SAFR-032).